A 125-amino-acid chain; its full sequence is uncharacterized protein (125 aa).

The interval 36–57 (EAKKAKEKQDSKTKDTDKKVDQ) is disordered. The helical transmembrane segment at 92-112 (ITIFLLIVLVSAIMIGIYFGI) threads the bilayer.

The protein localises to the membrane. This is an uncharacterized protein from Mycoplasma pneumoniae (strain ATCC 29342 / M129 / Subtype 1) (Mycoplasmoides pneumoniae).